Here is a 180-residue protein sequence, read N- to C-terminus: UPF0149 protein XOO1028 (180 aa).

This sequence belongs to the UPF0149 family.

The protein is UPF0149 protein XOO1028 of Xanthomonas oryzae pv. oryzae (strain MAFF 311018).